The sequence spans 466 residues: Clusterin-like protein 1 (466 aa).

Residues M1–C20 form the signal peptide. The stretch at K57 to D111 forms a coiled coil. Cystine bridges form between C105/C333, C116/C325, C119/C322, C124/C315, and C131/C305. N196, N257, N311, N351, N412, and N431 each carry an N-linked (GlcNAc...) asparagine glycan.

It belongs to the clusterin family.

Its subcellular location is the secreted. This chain is Clusterin-like protein 1 (CLUL1), found in Homo sapiens (Human).